We begin with the raw amino-acid sequence, 1088 residues long: MGKYNLILSEYLSFVYNSQSAVQIPIYYSSNSELEKRCIDFHVKCVDYSKRGLSLKSLFEEYKDVIDDATLLSILSYSYDKYNAVERKLINYAKGKPLEADLTVNELDYENNKITSELFQSAEEYTDSLMDPAILTSLSSNLNAVMFWLERHSNDVADANKIYKRRLDLFIIVASTINKYGVPRHNEKYRYDYDVMKDKPYYLVTWANSAIEMLMSVFSHEDYLIAKELIVLSYSNRSTLAKLVSSPMSILVALIDINGTFITNEELELEFSDKYVKAIVPDQTFNELQEMIDNMKKAGLVDIPRMIQEWLIDCSLEKFTLMSKIYSWSFHVGFRKQKMIDAALDQLKTEYTDDVDNEMYYEYTMLIRDEIVKMLEIPVKHDDHLLQDSELAGLLSMSSASNGESRQLKFGRKTIFSTKKNMHVMDDIAHGRYTPGVIPPVNVDRPIPLGRRDVPGRRTRIIFILPYEYFIAQHAVVEKMLSYAKHTREYAEFYSQSNQLLSYGDVTRFLSSNSMVLYTDVSQWDSSQHNTQPFRKGIIMGLDMLTNMTNDPKVVHTLNLYKQTQINLMDSYVQIPDGDVIKKIQYGAVASGEKQTKAANSIANLALIKTVLSRIANKYSFITKIIRVDGDDNYAVLQFNTDVTKQMVQEVSDDVRYIYSRMNAKVKALVSTVGIEIAKRYIAGGKIFFRAGINLLNNEKRGQSTQWDQAAILYSNYIVNKLRGFETDREFILTKIIQMTSVAITGSLRLFPSERVLTTNSTFKVFDSEDFIIEYGTTDDEVYIQRAFMSLSSQKSGIADEIASSQTFKNYVSKLSDQLLVSKNTIVSKGIAVTEKAKLNSYAPVYLEKRRAQISALLTMLQKPVSFKSNKITINDILRDIKPFFVTTEANLPIQYRKFMPTLPDNVQYVIQCIGSRTYQIEDSGSKSSISKLISKYSVYKPSIEELYKVISLREREIQLYLVSLGVPLIDASTYVGSRIYSQDKYKILESYVYNLLSINYGCYQLFDFNSPDLEKLIRIPFKGKIPAVTFILHLYAKLEIINHAIKNRAWISLFCNYPKSEMIKLWKKMWNITALRSPYTSANFFQD.

The region spanning 501–687 is the RdRp catalytic domain; that stretch reads LSYGDVTRFL…AKRYIAGGKI (187 aa).

The protein belongs to the reoviridae RNA-directed RNA polymerase family. In terms of assembly, interacts with VP3 (Potential). Interacts with VP2; this interaction activates VP1. Interacts with NSP5; this interaction is probably necessary for the formation of functional virus factories. Interacts with NSP2; this interaction is weak. Mg(2+) is required as a cofactor.

The protein localises to the virion. The enzyme catalyses RNA(n) + a ribonucleoside 5'-triphosphate = RNA(n+1) + diphosphate. In terms of biological role, RNA-directed RNA polymerase that is involved in both transcription and genome replication. Together with VP3 capping enzyme, forms an enzyme complex positioned near the channels situated at each of the five-fold vertices of the core. Following infection, the outermost layer of the virus is lost, leaving a double-layered particle (DLP) made up of the core and VP6 shell. VP1 then catalyzes the transcription of fully conservative plus-strand genomic RNAs that are extruded through the DLP's channels into the cytoplasm where they function as mRNAs for translation of viral proteins. One copy of each of the viral (+)RNAs is also recruited during core assembly, together with newly synthesized polymerase complexes and VP2. The polymerase of these novo-formed particles catalyzes the synthesis of complementary minus-strands leading to dsRNA formation. To do so, the polymerase specifically recognizes and binds 4 bases 5'-UGUG-3' in the conserved 3'-sequence of plus-strand RNA templates. VP2 presumably activates the autoinhibited VP1-RNA complex to coordinate packaging and genome replication. Once dsRNA synthesis is complete, the polymerase switches to the transcriptional mode, thus providing secondary transcription. This chain is RNA-directed RNA polymerase, found in Homo sapiens (Human).